An 80-amino-acid polypeptide reads, in one-letter code: DNA-binding protein HU-like (80 aa).

The protein belongs to the bacterial histone-like protein family.

Its function is as follows. Histone-like DNA-binding protein which is capable of wrapping DNA to stabilize it, and thus to prevent its denaturation under extreme environmental conditions. This Rickettsia rickettsii (strain Sheila Smith) protein is DNA-binding protein HU-like.